The sequence spans 702 residues: MELSKGNIVNLNDTAYYNNRELSWLAFNERVLQEAQDETNPLLERLKFISIFSSNLDEFFMVRVAGLKDQVSAGFNQPENKAGLTPKKQLNKIAIKAHELMTVQYGTFKNYVLPALELEGIERLTFHDLTKEQREFIEEYFDEQIFPVLTPVAIDAYRPFPMLLNKSLNLATLLYDEKQVEEENRTKLGIVQVPSLLERFIFLPSEGQKHKFILLEDVISSFTHKLFTGYKVSSVTRFRITRNADLTIHEEGARDLLKVIEKELKKRKWGAAVRLEVGKEHIDERVLALLYEVLEVKDEDVYIMDGPLDLTCLFSLYKKLAPLYEHLVYPALIPQRPQDLGDAEDVFEKAIEHDILLHHPFESFQPVVDFVRDAADDPNVLAIKQTLYRVSGDSPIIQALKIAAEKGKQVTVLVELKARFDEENNVHWAKELEQAGCHVIYGVSHLKTHSKITLVVRRKNGKIERFVHLGTGNYNDATAKLYTDFGYITSRKDFGVDATNFFNYLSGYTTKPHFHHLSVAPFDIREQFMDLIDEEIRYHRQYGNGYIIAKMNSLTDKPLIKKMYEASQAGVKVELIVRGTCCLRPGIPNVSENIRVVSVVGRYLEHSRIYYFHHNGEEKIYLSSADWMTRNMEKRVEISFPILDIEMKARIKAILQLTLADNVKTREQNKDGDYYYVINSGAEEIDSQVKLFKMAYQNTDAE.

N55 provides a ligand contact to ATP. Residues R389 and R419 each coordinate Mg(2+). The active-site Phosphohistidine intermediate is H449. Positions 482, 578, and 606 each coordinate ATP.

Belongs to the polyphosphate kinase 1 (PPK1) family. Mg(2+) is required as a cofactor. An intermediate of this reaction is the autophosphorylated ppk in which a phosphate is covalently linked to a histidine residue through a N-P bond.

It catalyses the reaction [phosphate](n) + ATP = [phosphate](n+1) + ADP. Its function is as follows. Catalyzes the reversible transfer of the terminal phosphate of ATP to form a long-chain polyphosphate (polyP). In Bacillus anthracis, this protein is Polyphosphate kinase.